Reading from the N-terminus, the 231-residue chain is Ribose-5-phosphate isomerase A (231 aa).

Substrate contacts are provided by residues 28-31, 83-86, and 96-99; these read TGST, DGAD, and KGGG. Catalysis depends on Glu105, which acts as the Proton acceptor. Lys123 is a binding site for substrate.

It belongs to the ribose 5-phosphate isomerase family. In terms of assembly, homodimer.

The enzyme catalyses aldehydo-D-ribose 5-phosphate = D-ribulose 5-phosphate. It participates in carbohydrate degradation; pentose phosphate pathway; D-ribose 5-phosphate from D-ribulose 5-phosphate (non-oxidative stage): step 1/1. In terms of biological role, catalyzes the reversible conversion of ribose-5-phosphate to ribulose 5-phosphate. The chain is Ribose-5-phosphate isomerase A from Sinorhizobium medicae (strain WSM419) (Ensifer medicae).